We begin with the raw amino-acid sequence, 218 residues long: Uracil-DNA glycosylase (218 aa).

The active-site Proton acceptor is aspartate 59.

Belongs to the uracil-DNA glycosylase (UDG) superfamily. UNG family.

It localises to the cytoplasm. The catalysed reaction is Hydrolyzes single-stranded DNA or mismatched double-stranded DNA and polynucleotides, releasing free uracil.. Functionally, excises uracil residues from the DNA which can arise as a result of misincorporation of dUMP residues by DNA polymerase or due to deamination of cytosine. The chain is Uracil-DNA glycosylase from Staphylococcus aureus (strain JH1).